The primary structure comprises 281 residues: Phosphatidylserine decarboxylase proenzyme (281 aa).

Catalysis depends on charge relay system; for autoendoproteolytic cleavage activity residues D90, H143, and S248. Catalysis depends on S248, which acts as the Schiff-base intermediate with substrate; via pyruvic acid; for decarboxylase activity. S248 carries the pyruvic acid (Ser); by autocatalysis modification.

Belongs to the phosphatidylserine decarboxylase family. PSD-B subfamily. Prokaryotic type I sub-subfamily. Heterodimer of a large membrane-associated beta subunit and a small pyruvoyl-containing alpha subunit. Pyruvate is required as a cofactor. Post-translationally, is synthesized initially as an inactive proenzyme. Formation of the active enzyme involves a self-maturation process in which the active site pyruvoyl group is generated from an internal serine residue via an autocatalytic post-translational modification. Two non-identical subunits are generated from the proenzyme in this reaction, and the pyruvate is formed at the N-terminus of the alpha chain, which is derived from the carboxyl end of the proenzyme. The autoendoproteolytic cleavage occurs by a canonical serine protease mechanism, in which the side chain hydroxyl group of the serine supplies its oxygen atom to form the C-terminus of the beta chain, while the remainder of the serine residue undergoes an oxidative deamination to produce ammonia and the pyruvoyl prosthetic group on the alpha chain. During this reaction, the Ser that is part of the protease active site of the proenzyme becomes the pyruvoyl prosthetic group, which constitutes an essential element of the active site of the mature decarboxylase.

It localises to the cell membrane. It carries out the reaction a 1,2-diacyl-sn-glycero-3-phospho-L-serine + H(+) = a 1,2-diacyl-sn-glycero-3-phosphoethanolamine + CO2. It functions in the pathway phospholipid metabolism; phosphatidylethanolamine biosynthesis; phosphatidylethanolamine from CDP-diacylglycerol: step 2/2. Its function is as follows. Catalyzes the formation of phosphatidylethanolamine (PtdEtn) from phosphatidylserine (PtdSer). The chain is Phosphatidylserine decarboxylase proenzyme from Francisella philomiragia subsp. philomiragia (strain ATCC 25017 / CCUG 19701 / FSC 153 / O#319-036).